Consider the following 562-residue polypeptide: uncharacterized protein (562 aa).

5 consecutive transmembrane segments (helical) span residues 4–26 (VRWI…GTML), 33–55 (GFAI…LGTF), 59–78 (ALLR…YKSG), 90–112 (LAQV…AFAF), and 159–181 (IAAG…VPFA). RCK C-terminal domains follow at residues 207–287 (PKTE…IIGT) and 295–375 (LKAI…QVGQ). 6 consecutive transmembrane segments (helical) span residues 385–402 (IAFL…GLVS), 406–428 (GGIA…CGWL), 449–471 (LGLG…VAIQ), 476–498 (LLVG…FAYH), 505–524 (VITC…VTGA), and 539–561 (VPYA…CTFV).

It belongs to the AAE transporter (TC 2.A.81) family.

Its subcellular location is the cell membrane. This is an uncharacterized protein from Bradyrhizobium diazoefficiens (strain JCM 10833 / BCRC 13528 / IAM 13628 / NBRC 14792 / USDA 110).